A 69-amino-acid chain; its full sequence is UPF0346 protein llmg_2280 (69 aa).

The protein belongs to the UPF0346 family.

This Lactococcus lactis subsp. cremoris (strain MG1363) protein is UPF0346 protein llmg_2280.